Reading from the N-terminus, the 244-residue chain is 15,16-dihydrobiliverdin:ferredoxin oxidoreductase (244 aa).

It belongs to the HY2 family.

It catalyses the reaction 15,16-dihydrobiliverdin + oxidized 2[4Fe-4S]-[ferredoxin] = biliverdin IXalpha + reduced 2[4Fe-4S]-[ferredoxin] + 2 H(+). In terms of biological role, catalyzes the two-electron reduction of biliverdin IX-alpha at the C15 methine bridge. This is 15,16-dihydrobiliverdin:ferredoxin oxidoreductase (pebA) from Gloeobacter violaceus (strain ATCC 29082 / PCC 7421).